The chain runs to 359 residues: Holliday junction branch migration complex subunit RuvB (359 aa).

Residues 1 to 10 (MPEHDPHQEN) show a composition bias toward basic and acidic residues. The segment at 1-20 (MPEHDPHQENRTVSSVRLED) is disordered. The interval 4 to 188 (HDPHQENRTV…FGIPLRLIFY (185 aa)) is large ATPase domain (RuvB-L). ATP is bound by residues leucine 27, arginine 28, glycine 69, lysine 72, threonine 73, threonine 74, 135–137 (EDF), arginine 178, tyrosine 188, and arginine 225. Mg(2+) is bound at residue threonine 73. The segment at 189–259 (TASELELIVS…TADAALQRLE (71 aa)) is small ATPAse domain (RuvB-S). Residues 262–359 (SLGLDAMDRR…LLHRDGSADE (98 aa)) are head domain (RuvB-H). DNA-binding residues include arginine 298, arginine 317, and arginine 322.

It belongs to the RuvB family. As to quaternary structure, homohexamer. Forms an RuvA(8)-RuvB(12)-Holliday junction (HJ) complex. HJ DNA is sandwiched between 2 RuvA tetramers; dsDNA enters through RuvA and exits via RuvB. An RuvB hexamer assembles on each DNA strand where it exits the tetramer. Each RuvB hexamer is contacted by two RuvA subunits (via domain III) on 2 adjacent RuvB subunits; this complex drives branch migration. In the full resolvosome a probable DNA-RuvA(4)-RuvB(12)-RuvC(2) complex forms which resolves the HJ.

It localises to the cytoplasm. It carries out the reaction ATP + H2O = ADP + phosphate + H(+). Its function is as follows. The RuvA-RuvB-RuvC complex processes Holliday junction (HJ) DNA during genetic recombination and DNA repair, while the RuvA-RuvB complex plays an important role in the rescue of blocked DNA replication forks via replication fork reversal (RFR). RuvA specifically binds to HJ cruciform DNA, conferring on it an open structure. The RuvB hexamer acts as an ATP-dependent pump, pulling dsDNA into and through the RuvAB complex. RuvB forms 2 homohexamers on either side of HJ DNA bound by 1 or 2 RuvA tetramers; 4 subunits per hexamer contact DNA at a time. Coordinated motions by a converter formed by DNA-disengaged RuvB subunits stimulates ATP hydrolysis and nucleotide exchange. Immobilization of the converter enables RuvB to convert the ATP-contained energy into a lever motion, pulling 2 nucleotides of DNA out of the RuvA tetramer per ATP hydrolyzed, thus driving DNA branch migration. The RuvB motors rotate together with the DNA substrate, which together with the progressing nucleotide cycle form the mechanistic basis for DNA recombination by continuous HJ branch migration. Branch migration allows RuvC to scan DNA until it finds its consensus sequence, where it cleaves and resolves cruciform DNA. This chain is Holliday junction branch migration complex subunit RuvB, found in Granulibacter bethesdensis (strain ATCC BAA-1260 / CGDNIH1).